The sequence spans 374 residues: Flap endonuclease 1 (374 aa).

Residues 1 to 105 (MGVKGLNQLI…GELEKRMIRK (105 aa)) form an N-domain region. Aspartate 34 contacts Mg(2+). DNA-binding residues include arginine 47 and arginine 71. Mg(2+) is bound by residues aspartate 87, glutamate 159, glutamate 161, aspartate 180, and aspartate 182. Residues 123–254 (EMVRYEKRSV…VTAFKLIKEH (132 aa)) are I-domain. A DNA-binding site is contributed by glutamate 159. Residues glycine 232 and aspartate 234 each coordinate DNA. Aspartate 234 is a Mg(2+) binding site. The segment at 341–349 (VQGRLDGFF) is interaction with PCNA. Positions 354–365 (TEKRKPEQDKKT) are enriched in basic and acidic residues. The disordered stretch occupies residues 354-374 (TEKRKPEQDKKTKGSKKAKKK).

Belongs to the XPG/RAD2 endonuclease family. FEN1 subfamily. Interacts with PCNA. Three molecules of FEN1 bind to one PCNA trimer with each molecule binding to one PCNA monomer. PCNA stimulates the nuclease activity without altering cleavage specificity. Mg(2+) is required as a cofactor. Phosphorylated. Phosphorylation upon DNA damage induces relocalization to the nuclear plasma.

It localises to the nucleus. It is found in the nucleolus. Its subcellular location is the nucleoplasm. The protein resides in the mitochondrion. Its function is as follows. Structure-specific nuclease with 5'-flap endonuclease and 5'-3' exonuclease activities involved in DNA replication and repair. During DNA replication, cleaves the 5'-overhanging flap structure that is generated by displacement synthesis when DNA polymerase encounters the 5'-end of a downstream Okazaki fragment. It enters the flap from the 5'-end and then tracks to cleave the flap base, leaving a nick for ligation. Also involved in the long patch base excision repair (LP-BER) pathway, by cleaving within the apurinic/apyrimidinic (AP) site-terminated flap. Acts as a genome stabilization factor that prevents flaps from equilibrating into structures that lead to duplications and deletions. Also possesses 5'-3' exonuclease activity on nicked or gapped double-stranded DNA, and exhibits RNase H activity. Also involved in replication and repair of rDNA and in repairing mitochondrial DNA. This is Flap endonuclease 1 from Meyerozyma guilliermondii (strain ATCC 6260 / CBS 566 / DSM 6381 / JCM 1539 / NBRC 10279 / NRRL Y-324) (Yeast).